Consider the following 247-residue polypeptide: ATP synthase subunit a, chloroplastic (247 aa).

A run of 5 helical transmembrane segments spans residues Q38–V58, V95–F115, I134–T154, L199–L219, and G220–G240.

It belongs to the ATPase A chain family. As to quaternary structure, F-type ATPases have 2 components, CF(1) - the catalytic core - and CF(0) - the membrane proton channel. CF(1) has five subunits: alpha(3), beta(3), gamma(1), delta(1), epsilon(1). CF(0) has four main subunits: a, b, b' and c.

It is found in the plastid. Its subcellular location is the chloroplast thylakoid membrane. In terms of biological role, key component of the proton channel; it plays a direct role in the translocation of protons across the membrane. This chain is ATP synthase subunit a, chloroplastic, found in Piper cenocladum (Ant piper).